Consider the following 630-residue polypeptide: Probable potassium transport system protein Kup 1 (630 aa).

Helical transmembrane passes span Phe-15–Leu-35, Leu-59–Met-79, Trp-109–Pro-129, Pro-145–Val-165, Val-173–Val-193, Leu-223–Met-243, Trp-255–Leu-275, Leu-297–Phe-317, Ile-345–Phe-365, Ala-374–Val-394, Ala-405–Leu-425, and Ile-427–Thr-447.

The protein belongs to the HAK/KUP transporter (TC 2.A.72) family.

The protein localises to the cell inner membrane. The catalysed reaction is K(+)(in) + H(+)(in) = K(+)(out) + H(+)(out). In terms of biological role, transport of potassium into the cell. Likely operates as a K(+):H(+) symporter. In Dechloromonas aromatica (strain RCB), this protein is Probable potassium transport system protein Kup 1.